The sequence spans 278 residues: HTH-type transcriptional activator RhaS (278 aa).

The HTH araC/xylS-type domain maps to 174 to 272 (NLLLAWLEDH…NWSPRDIRQG (99 aa)). DNA-binding regions (H-T-H motif) lie at residues 191-212 (DAVA…KQQT) and 239-262 (VTDI…RREF).

In terms of assembly, binds DNA as a dimer.

It is found in the cytoplasm. Its function is as follows. Activates expression of the rhaBAD and rhaT operons. The sequence is that of HTH-type transcriptional activator RhaS from Escherichia coli O127:H6 (strain E2348/69 / EPEC).